Here is a 127-residue protein sequence, read N- to C-terminus: Large ribosomal subunit protein bL12 (127 aa).

The disordered stretch occupies residues 93–127 (LVDEAPNPVSEGVSREEADDLKAQIEDAGGEVELQ). Residues 105-117 (VSREEADDLKAQI) show a composition bias toward basic and acidic residues.

The protein belongs to the bacterial ribosomal protein bL12 family. In terms of assembly, homodimer. Part of the ribosomal stalk of the 50S ribosomal subunit. Forms a multimeric L10(L12)X complex, where L10 forms an elongated spine to which 2 to 4 L12 dimers bind in a sequential fashion. Binds GTP-bound translation factors.

Forms part of the ribosomal stalk which helps the ribosome interact with GTP-bound translation factors. Is thus essential for accurate translation. The chain is Large ribosomal subunit protein bL12 from Salinibacter ruber (strain DSM 13855 / M31).